The chain runs to 993 residues: Chromosome transmission fidelity protein 18 homolog (993 aa).

The tract at residues 26 to 72 (PDEFNAYDGPSTSKQAAEKQKENRAPVAALRDSTRLGNSTLGSPQLS) is disordered. Polar residues predominate over residues 60–72 (RLGNSTLGSPQLS). 427 to 434 (GPPGLGKT) contacts ATP. The tract at residues 892–913 (AAPKGGAPSAPAAKKKTSGAAA) is disordered. Over residues 894 to 913 (PKGGAPSAPAAKKKTSGAAA) the composition is skewed to low complexity.

It belongs to the activator 1 small subunits family. CTF18 subfamily. In terms of assembly, component of the CTF18-RFC complex.

The protein resides in the nucleus. Functionally, chromosome cohesion factor involved in sister chromatid cohesion and fidelity of chromosome transmission. Component of one of the cell nuclear antigen loader complexes, CTF18-replication factor C (CTF18-RFC). The CTF18-RFC complex catalyzes the ATP-dependent loading of PCNA onto primed and gapped DNA and has weak ATPase activity. The CTF18-RFC complex catalyzes the ATP-dependent loading of PCNA onto primed and gapped DNA. The sequence is that of Chromosome transmission fidelity protein 18 homolog from Drosophila melanogaster (Fruit fly).